The sequence spans 460 residues: Glutamate--tRNA ligase 2 (460 aa).

A 'HIGH' region motif is present at residues 8–18; that stretch reads PSPTGFLHVGG. The 'KMSKS' region signature appears at 237-241; it reads KLSKR. An ATP-binding site is contributed by Lys240.

Belongs to the class-I aminoacyl-tRNA synthetase family. Glutamate--tRNA ligase type 1 subfamily. As to quaternary structure, monomer.

The protein localises to the cytoplasm. It carries out the reaction tRNA(Glu) + L-glutamate + ATP = L-glutamyl-tRNA(Glu) + AMP + diphosphate. Functionally, catalyzes the attachment of glutamate to tRNA(Glu) in a two-step reaction: glutamate is first activated by ATP to form Glu-AMP and then transferred to the acceptor end of tRNA(Glu). The chain is Glutamate--tRNA ligase 2 from Campylobacter fetus subsp. fetus (strain 82-40).